A 222-amino-acid chain; its full sequence is Voltage-dependent calcium channel gamma-1 subunit (222 aa).

Residues 1–10 (MSPTEAPKVR) lie on the Cytoplasmic side of the membrane. A helical membrane pass occupies residues 11–29 (VTLFCILVGIVLAMTAVVS). Over 30-108 (DHWAVLSPHM…TQKEYSISAA (79 aa)) the chain is Extracellular. Residues N43 and N79 are each glycosylated (N-linked (GlcNAc...) asparagine). A disulfide bridge links C57 with C80. The chain crosses the membrane as a helical span at residues 109 to 129 (AISVFSLGFLIMGTICALMAF). The Cytoplasmic segment spans residues 130-134 (RKKRD). Residues 135–155 (YLLRPASMFYVFAGLCLFVSL) form a helical membrane-spanning segment. Residues 156 to 179 (EVMRQSVKRMIDSEDTVWIEYYYS) are Extracellular-facing. The chain crosses the membrane as a helical span at residues 180–204 (WSFACACAAFVLLFLGGISLLLFSL). The Cytoplasmic segment spans residues 205 to 222 (PRMPQNPWESCMDAEPEH).

It belongs to the PMP-22/EMP/MP20 family. CACNG subfamily. In terms of assembly, component of a calcium channel complex consisting of a pore-forming alpha subunit (CACNA1S) and the ancillary subunits CACNB1 or CACNB2, CACNG1 and CACNA2D1. The channel complex contains alpha, beta, gamma and delta subunits in a 1:1:1:1 ratio, i.e. it contains either CACNB1 or CACNB2. In terms of processing, N-glycosylated. As to expression, skeletal muscle (at protein level).

The protein localises to the cell membrane. It is found in the sarcolemma. Regulatory subunit of the voltage-gated calcium channel that gives rise to L-type calcium currents in skeletal muscle. Regulates channel inactivation kinetics. In Oryctolagus cuniculus (Rabbit), this protein is Voltage-dependent calcium channel gamma-1 subunit (CACNG1).